We begin with the raw amino-acid sequence, 145 residues long: UPF0735 ACT domain-containing protein CPR_1404 (145 aa).

In terms of domain architecture, ACT spans Ile-69 to Met-144.

Belongs to the UPF0735 family.

This Clostridium perfringens (strain SM101 / Type A) protein is UPF0735 ACT domain-containing protein CPR_1404.